We begin with the raw amino-acid sequence, 533 residues long: Phospho-2-dehydro-3-deoxyheptonate aldolase 1, chloroplastic (533 aa).

The N-terminal 57 residues, 1–57 (MALSTNSTTSSLLPKTPLVQQPLLKNASLPTTTKAIRFIQPISAIHSSDSSKNTPIV), are a transit peptide targeting the chloroplast. Positions 47-56 (SSDSSKNTPI) are enriched in polar residues. The tract at residues 47-70 (SSDSSKNTPIVSAKPSSPPAATST) is disordered. Residues 57–70 (VSAKPSSPPAATST) are compositionally biased toward low complexity. A Mn(2+)-binding site is contributed by cysteine 145. Substrate-binding positions include arginine 184, 343–344 (ER), lysine 366, and arginine 397. Positions 429, 471, and 501 each coordinate Mn(2+).

It belongs to the class-II DAHP synthase family. Homodimer. It depends on Mn(2+) as a cofactor. In terms of tissue distribution, mostly expressed in flowers, especially in petal limbs and tubes, and, to a lower extent, in roots, stems, stigmas, anthers, leaves and sepals.

It localises to the plastid. Its subcellular location is the chloroplast. It carries out the reaction D-erythrose 4-phosphate + phosphoenolpyruvate + H2O = 7-phospho-2-dehydro-3-deoxy-D-arabino-heptonate + phosphate. The protein operates within metabolic intermediate biosynthesis; chorismate biosynthesis; chorismate from D-erythrose 4-phosphate and phosphoenolpyruvate: step 1/7. Its function is as follows. Involved in the production of volatile organic compounds (VOCs), including floral volatile benzenoids and phenylpropanoids (FVBP), in flowers of fragrant cultivars (e.g. cv. Mitchell and cv. V26), scent attracting pollinators (e.g. the night-active hawkmoth pollinator Manduca sexta). Catalyzes an aldol-like condensation reaction between phosphoenolpyruvate (PEP) and D-erythrose 4-phosphate (E4P) to generate 3-deoxy-D-arabino-heptulosonate 7-phosphate (DAH7P) and inorganic phosphate. The polypeptide is Phospho-2-dehydro-3-deoxyheptonate aldolase 1, chloroplastic (Petunia hybrida (Petunia)).